The sequence spans 166 residues: UPF0304 protein VF_1794 (166 aa).

It belongs to the UPF0304 family.

The protein is UPF0304 protein VF_1794 of Aliivibrio fischeri (strain ATCC 700601 / ES114) (Vibrio fischeri).